A 40-amino-acid chain; its full sequence is MADTTGRIPLWLVGTVTGIPVIGLIGVFFYGSYSGLGSSL.

The helical transmembrane segment at 8–28 (IPLWLVGTVTGIPVIGLIGVF) threads the bilayer.

It belongs to the PsbJ family. PSII is composed of 1 copy each of membrane proteins PsbA, PsbB, PsbC, PsbD, PsbE, PsbF, PsbH, PsbI, PsbJ, PsbK, PsbL, PsbM, PsbT, PsbX, PsbY, PsbZ, Psb30/Ycf12, at least 3 peripheral proteins of the oxygen-evolving complex and a large number of cofactors. It forms dimeric complexes.

The protein localises to the plastid. It is found in the chloroplast thylakoid membrane. One of the components of the core complex of photosystem II (PSII). PSII is a light-driven water:plastoquinone oxidoreductase that uses light energy to abstract electrons from H(2)O, generating O(2) and a proton gradient subsequently used for ATP formation. It consists of a core antenna complex that captures photons, and an electron transfer chain that converts photonic excitation into a charge separation. The chain is Photosystem II reaction center protein J from Musa acuminata (Banana).